A 187-amino-acid polypeptide reads, in one-letter code: Ribosome-recycling factor (187 aa).

It belongs to the RRF family.

The protein resides in the cytoplasm. Functionally, responsible for the release of ribosomes from messenger RNA at the termination of protein biosynthesis. May increase the efficiency of translation by recycling ribosomes from one round of translation to another. The polypeptide is Ribosome-recycling factor (Methylobacterium radiotolerans (strain ATCC 27329 / DSM 1819 / JCM 2831 / NBRC 15690 / NCIMB 10815 / 0-1)).